The following is a 611-amino-acid chain: MPRRKRNAGSSSDGTEDSDFSTDLEHTDSSESDGTSRRSARVTRSSARLSQSSQDSSPVRNLQSFGTEEPAYSTRRVTRSQQQPTPVTPKKYPLRQTRSSGSETEQVVDFSDRETKNTADHDESPPRTPTGNAPSSESDIDISSPNVSHDESIAKDMSLKDSGSDLSHRPKRRRFHESYNFNMKCPTPGCNSLGHLTGKHERHFSISGCPLYHNLSADECKVRAQSRDKQIEERMLSHRQDDNNRHATRHQAPTERQLRYKEKVAELRKKRNSGLSKEQKEKYMEHRQTYGNTREPLLENLTSEYDLDLFRRAQARASEDLEKLRLQGQITEGSNMIKTIAFGRYELDTWYHSPYPEEYARLGRLYMCEFCLKYMKSQTILRRHMAKCVWKHPPGDEIYRKGSISVFEVDGKKNKIYCQNLCLLAKLFLDHKTLYYDVEPFLFYVMTEADNTGCHLIGYFSKEKNSFLNYNVSCILTMPQYMRQGYGKMLIDFSYLLSKVEEKVGSPERPLSDLGLISYRSYWKEVLLRYLHNFQGKEISIKEISQETAVNPVDIVSTLQALQMLKYWKGKHLVLKRQDLIDEWIAKEAKRSNSNKTMDPSCLKWTPPKGT.

The disordered stretch occupies residues 1-173; sequence MPRRKRNAGS…SDLSHRPKRR (173 aa). Ser-10 carries the phosphoserine modification. Residues 42–57 show a composition bias toward low complexity; it reads VTRSSARLSQSSQDSS. Ser-50 and Ser-53 each carry phosphoserine; by ATR. A Phosphoserine; by PLK1 modification is found at Ser-57. Ser-64 carries the phosphoserine modification. Phosphothreonine; by CDK1 is present on residues Thr-85 and Thr-88. The span at 96-105 shows a compositional bias: polar residues; that stretch reads QTRSSGSETE. At Ser-102 the chain carries Phosphoserine. Position 104 is a phosphothreonine (Thr-104). The segment covering 110-125 has biased composition (basic and acidic residues); sequence FSDRETKNTADHDESP. Residues Ser-111 and Ser-124 each carry the phosphoserine modification. Thr-128 carries the phosphothreonine modification. Low complexity predominate over residues 134–145; it reads PSSESDIDISSP. The span at 148 to 168 shows a compositional bias: basic and acidic residues; the sequence is SHDESIAKDMSLKDSGSDLSH. Ser-158, Ser-162, Ser-164, and Ser-178 each carry phosphoserine. The CCHHC-type zinc finger occupies 176–219; it reads HESYNFNMKCPTPGCNSLGHLTGKHERHFSISGCPLYHNLSADE. N6-acetyllysine occurs at positions 199 and 277. Lys-323 is covalently cross-linked (Glycyl lysine isopeptide (Lys-Gly) (interchain with G-Cter in SUMO2)). The region spanning 332–607 is the MYST-type HAT domain; sequence EGSNMIKTIA…MDPSCLKWTP (276 aa). A Glycyl lysine isopeptide (Lys-Gly) (interchain with G-Cter in ubiquitin) cross-link involves residue Lys-338. The C2HC MYST-type zinc finger occupies 365–390; the sequence is LYMCEFCLKYMKSQTILRRHMAKCVW. Cys-368, Cys-371, His-384, and Cys-388 together coordinate Zn(2+). Position 432 is an N6-acetyllysine; by autocatalysis (Lys-432). Residues 475–477 and 483–488 contribute to the acetyl-CoA site; these read ILT and RQGYGK. Ser-506 carries the phosphoserine modification. Glu-508 functions as the Proton donor/acceptor in the catalytic mechanism. Acetyl-CoA is bound by residues Ser-512 and Ser-521.

Belongs to the MYST (SAS/MOZ) family. In terms of assembly, component of the HBO1 complex composed of KAT7/HBO1, MEAF6, ING4 or ING5, and one scaffold subunit: complexes containing BRPF scaffold (BRPF1, BRD1/BRPF2 or BRPF3) direct KAT7/HBO1 specificity towards H3K14ac, while complexes containing JADE scaffold (JADE1, JADE2 and JADE3) mediate acetylation of histone H4. Interacts with MCM2 and ORC1. Interacts with the androgen receptor (AR); in the presence of dihydrotestosterone. Interacts with CDT1. Interacts with MAP2K1 and CUL1. Interacts with p53/TP53; leading to inhibit histone acetyltransferase activity. Interacts with MIS18BP1. Post-translationally, phosphorylated at Ser-50 and Ser-53 by ATR in response to DNA damage, promoting its ubiquitination by the CRL4(DDB2) complex and subsequent degradation. Phosphorylation at Ser-50 and Ser-53 by ATR in response to ultraviolet-induced DNA, promotes localization to DNA damage sites. Phosphorylation at Ser-57 by PLK1 during mitosis seems important for prereplicative complex formation and DNA replication licensing, and requires prior phosphorylation at Thr-85 and Thr-88 by CDK1. Phosphorylated by MAP2K1, which accelerates its degradation. Ubiquitinated at Lys-338, leading to proteasomal degradation. Ubiquitinated by the CRL4(DDB2) complex following phosphorylation by ATR, leading to its subsequent degradation. In terms of processing, autoacetylation at Lys-432 is required for proper function. As to expression, ubiquitously expressed, with highest levels in testis.

The protein localises to the nucleus. The protein resides in the chromosome. Its subcellular location is the centromere. It is found in the cytoplasm. It localises to the cytosol. The catalysed reaction is L-lysyl-[histone] + acetyl-CoA = N(6)-acetyl-L-lysyl-[histone] + CoA + H(+). Its activity is regulated as follows. Histone acetyltransferase activity is inhibited by GMNN in the context of a complex with CDT1, inhibiting histone H4 acetylation and DNA replication licensing. Selectively inhibited by WM-3835 (N'-(4-fluoro-5-methyl-[1,1'-biphenyl]-3-carbonyl)-3- hydroxybenzenesulfonohydrazide) inhibitor. Catalytic subunit of histone acetyltransferase HBO1 complexes, which specifically mediate acetylation of histone H3 at 'Lys-14' (H3K14ac), thereby regulating various processes, such as gene transcription, protein ubiquitination, immune regulation, stem cell pluripotent and self-renewal maintenance and embryonic development. Some complexes also catalyze acetylation of histone H4 at 'Lys-5', 'Lys-8' and 'Lys-12' (H4K5ac, H4K8ac and H4K12ac, respectively), regulating DNA replication initiation, regulating DNA replication initiation. Specificity of the HBO1 complexes is determined by the scaffold subunit: complexes containing BRPF scaffold (BRPF1, BRD1/BRPF2 or BRPF3) direct KAT7/HBO1 specificity towards H3K14ac, while complexes containing JADE (JADE1, JADE2 and JADE3) scaffold direct KAT7/HBO1 specificity towards histone H4. H3K14ac promotes transcriptional elongation by facilitating the processivity of RNA polymerase II. Acts as a key regulator of hematopoiesis by forming a complex with BRD1/BRPF2, directing KAT7/HBO1 specificity towards H3K14ac and promoting erythroid differentiation. H3K14ac is also required for T-cell development. KAT7/HBO1-mediated acetylation facilitates two consecutive steps, licensing and activation, in DNA replication initiation: H3K14ac facilitates the activation of replication origins, and histone H4 acetylation (H4K5ac, H4K8ac and H4K12ac) facilitates chromatin loading of MCM complexes, promoting DNA replication licensing. Acts as a positive regulator of centromeric CENPA assembly: recruited to centromeres and mediates histone acetylation, thereby preventing centromere inactivation mediated by SUV39H1, possibly by increasing histone turnover/exchange. Involved in nucleotide excision repair: phosphorylation by ATR in response to ultraviolet irradiation promotes its localization to DNA damage sites, where it mediates histone acetylation to facilitate recruitment of XPC at the damaged DNA sites. Acts as an inhibitor of NF-kappa-B independently of its histone acetyltransferase activity. Its function is as follows. Plays a central role in the maintenance of leukemia stem cells in acute myeloid leukemia (AML). Acts by mediating acetylation of histone H3 at 'Lys-14' (H3K14ac), thereby facilitating the processivity of RNA polymerase II to maintain the high expression of key genes, such as HOXA9 and HOXA10 that help to sustain the functional properties of leukemia stem cells. The chain is Histone acetyltransferase KAT7 from Homo sapiens (Human).